A 471-amino-acid chain; its full sequence is Abscission/NoCut checkpoint regulator (471 aa).

A disordered region spans residues 39-64; that stretch reads GGAGQGREGRSWGEGPRGPGLGRRDL. Residues 74–133 form an FYVE-type zinc finger; it reads ATMESRCYGCAVKFTLFKKEYGCKNCGRAFCSGCLSFSAAVPRTGNTQQKVCKQCHEVLT. Zn(2+) contacts are provided by cysteine 80, cysteine 83, cysteine 96, cysteine 99, cysteine 104, cysteine 107, cysteine 125, and cysteine 128. Serine 144 carries the phosphoserine modification. The MIM1-A signature appears at 174–187; sequence DQMIAERLARLRQE. A Glycyl lysine isopeptide (Lys-Gly) (interchain with G-Cter in SUMO2) cross-link involves residue lysine 207. Residue threonine 243 is modified to Phosphothreonine. Residues 271-299 are disordered; it reads KGGGPAASLQNDLNQGGPGSTNSKRQANW. Polar residues predominate over residues 278-299; sequence SLQNDLNQGGPGSTNSKRQANW. Phosphoserine occurs at positions 286 and 293. The stretch at 311–375 forms a coiled coil; the sequence is EAALELREEN…RVLQQLTEEA (65 aa). The short motif at 326–339 is the MIM1-B element; sequence ILALAKRLAMLRGQ. The residue at position 354 (serine 354) is a Phosphoserine. The disordered stretch occupies residues 386 to 412; sequence PAEQASRPWTQPRGAEPEAQDVDPRPE. At serine 463 the chain carries Phosphoserine.

In terms of assembly, interacts (via MIM1-B) with VPS4A; interaction takes place at the midbody ring following cytokinesis checkpoint activation. Post-translationally, phosphorylated in vitro at Ser-22 by AURKB; however, phosphorylation at this site could not be confirmed in vivo. Detected in brain, heart, skeletal muscle and kidney. Expressed in the liver (at protein level).

The protein resides in the cytoplasm. Its subcellular location is the cytoskeleton. It is found in the microtubule organizing center. It localises to the centrosome. The protein localises to the cleavage furrow. The protein resides in the midbody. Its subcellular location is the midbody ring. In terms of biological role, key regulator of abscission step in cytokinesis: part of the cytokinesis checkpoint, a process required to delay abscission to prevent both premature resolution of intercellular chromosome bridges and accumulation of DNA damage. Together with CHMP4C, required to retain abscission-competent VPS4 (VPS4A and/or VPS4B) at the midbody ring until abscission checkpoint signaling is terminated at late cytokinesis. Deactivation of AURKB results in dephosphorylation of CHMP4C followed by its dissociation from ZFYVE19/ANCHR and VPS4 and subsequent abscission. This Homo sapiens (Human) protein is Abscission/NoCut checkpoint regulator (ZFYVE19).